We begin with the raw amino-acid sequence, 206 residues long: 2,3-bisphosphoglycerate-dependent phosphoglycerate mutase (206 aa).

Substrate is bound by residues 9–16 (RHGQSEWN), 22–23 (TG), R61, 88–91 (ERDY), K99, 115–116 (RR), and 159–160 (GN). Residue H10 is the Tele-phosphohistidine intermediate of the active site. E88 (proton donor/acceptor) is an active-site residue.

The protein belongs to the phosphoglycerate mutase family. BPG-dependent PGAM subfamily. As to quaternary structure, homodimer.

The catalysed reaction is (2R)-2-phosphoglycerate = (2R)-3-phosphoglycerate. It participates in carbohydrate degradation; glycolysis; pyruvate from D-glyceraldehyde 3-phosphate: step 3/5. Catalyzes the interconversion of 2-phosphoglycerate and 3-phosphoglycerate. This is 2,3-bisphosphoglycerate-dependent phosphoglycerate mutase from Bartonella quintana (strain Toulouse) (Rochalimaea quintana).